A 358-amino-acid chain; its full sequence is Holliday junction branch migration complex subunit RuvB (358 aa).

A disordered region spans residues 1–24; it reads MAIKRSHNSPPATEENLLTPNPTI. Residues 8-22 show a composition bias toward polar residues; that stretch reads NSPPATEENLLTPNP. Residues 13–195 are large ATPase domain (RuvB-L); it reads TEENLLTPNP…FGLIQRLRFY (183 aa). Residues Ile34, Arg35, Gly76, Lys79, Thr80, Thr81, 142-144, Arg185, Tyr195, and Arg232 contribute to the ATP site; that span reads EDY. Residue Thr80 coordinates Mg(2+). Residues 196–266 form a small ATPAse domain (RuvB-S) region; the sequence is AVEELTAIIL…LAAEGLNQLN (71 aa). Residues 269–358 are head domain (RuvB-H); it reads SMGLDWTDRL…KDRSLPLFEF (90 aa). DNA contacts are provided by Arg324 and Arg329.

The protein belongs to the RuvB family. In terms of assembly, homohexamer. Forms an RuvA(8)-RuvB(12)-Holliday junction (HJ) complex. HJ DNA is sandwiched between 2 RuvA tetramers; dsDNA enters through RuvA and exits via RuvB. An RuvB hexamer assembles on each DNA strand where it exits the tetramer. Each RuvB hexamer is contacted by two RuvA subunits (via domain III) on 2 adjacent RuvB subunits; this complex drives branch migration. In the full resolvosome a probable DNA-RuvA(4)-RuvB(12)-RuvC(2) complex forms which resolves the HJ.

It is found in the cytoplasm. The enzyme catalyses ATP + H2O = ADP + phosphate + H(+). In terms of biological role, the RuvA-RuvB-RuvC complex processes Holliday junction (HJ) DNA during genetic recombination and DNA repair, while the RuvA-RuvB complex plays an important role in the rescue of blocked DNA replication forks via replication fork reversal (RFR). RuvA specifically binds to HJ cruciform DNA, conferring on it an open structure. The RuvB hexamer acts as an ATP-dependent pump, pulling dsDNA into and through the RuvAB complex. RuvB forms 2 homohexamers on either side of HJ DNA bound by 1 or 2 RuvA tetramers; 4 subunits per hexamer contact DNA at a time. Coordinated motions by a converter formed by DNA-disengaged RuvB subunits stimulates ATP hydrolysis and nucleotide exchange. Immobilization of the converter enables RuvB to convert the ATP-contained energy into a lever motion, pulling 2 nucleotides of DNA out of the RuvA tetramer per ATP hydrolyzed, thus driving DNA branch migration. The RuvB motors rotate together with the DNA substrate, which together with the progressing nucleotide cycle form the mechanistic basis for DNA recombination by continuous HJ branch migration. Branch migration allows RuvC to scan DNA until it finds its consensus sequence, where it cleaves and resolves cruciform DNA. This Microcystis aeruginosa (strain NIES-843 / IAM M-2473) protein is Holliday junction branch migration complex subunit RuvB.